Reading from the N-terminus, the 118-residue chain is Probable small nuclear ribonucleoprotein Sm D2 (118 aa).

One can recognise a Sm domain in the interval 29-115 (LSILTNSVKN…VILVVKNPLA (87 aa)).

It belongs to the snRNP core protein family.

The protein resides in the nucleus. It is found in the cytoplasm. It localises to the cytosol. Functionally, plays a role in pre-mRNA splicing as a core component of the spliceosomal U1, U2, U4 and U5 small nuclear ribonucleoproteins (snRNPs), the building blocks of the spliceosome. This is Probable small nuclear ribonucleoprotein Sm D2 (snr-4) from Caenorhabditis elegans.